A 419-amino-acid chain; its full sequence is Zinc metalloprotease RasP (419 aa).

The next 4 membrane-spanning stretches (helical) occupy residues 4–24 (VIAF…GHLI), 173–193 (IAAG…MLGL), 349–369 (LAAF…PALD), and 391–411 (EAFV…VVTW). Histidine 18 serves as a coordination point for Zn(2+). Glutamate 19 is a catalytic residue. Histidine 22 lines the Zn(2+) pocket. Residues 184 to 269 (AYVILVMLGL…KLTKYVTPEA (86 aa)) form the PDZ domain.

The protein belongs to the peptidase M50B family. Zn(2+) is required as a cofactor.

It is found in the cell membrane. In terms of biological role, is responsible for Site-2 cleavage of the RsiW anti-sigma factor. This results, after a third proteolytic step catalyzed by the ClpXP protease, in the release of SigW and the transcription activation of the genes under the control of the sigma-W factor. This Bacillus licheniformis (strain ATCC 14580 / DSM 13 / JCM 2505 / CCUG 7422 / NBRC 12200 / NCIMB 9375 / NCTC 10341 / NRRL NRS-1264 / Gibson 46) protein is Zinc metalloprotease RasP (rasP).